A 257-amino-acid chain; its full sequence is Imidazole glycerol phosphate synthase subunit HisF (257 aa).

Residues D11 and D130 contribute to the active site.

Belongs to the HisA/HisF family. In terms of assembly, heterodimer of HisH and HisF.

The protein localises to the cytoplasm. The enzyme catalyses 5-[(5-phospho-1-deoxy-D-ribulos-1-ylimino)methylamino]-1-(5-phospho-beta-D-ribosyl)imidazole-4-carboxamide + L-glutamine = D-erythro-1-(imidazol-4-yl)glycerol 3-phosphate + 5-amino-1-(5-phospho-beta-D-ribosyl)imidazole-4-carboxamide + L-glutamate + H(+). The protein operates within amino-acid biosynthesis; L-histidine biosynthesis; L-histidine from 5-phospho-alpha-D-ribose 1-diphosphate: step 5/9. In terms of biological role, IGPS catalyzes the conversion of PRFAR and glutamine to IGP, AICAR and glutamate. The HisF subunit catalyzes the cyclization activity that produces IGP and AICAR from PRFAR using the ammonia provided by the HisH subunit. The polypeptide is Imidazole glycerol phosphate synthase subunit HisF (Actinobacillus succinogenes (strain ATCC 55618 / DSM 22257 / CCUG 43843 / 130Z)).